A 332-amino-acid chain; its full sequence is Ubiquinone biosynthesis protein COQ4, mitochondrial (332 aa).

Residues Met1–Phe24 constitute a mitochondrion transit peptide. 4 residues coordinate Zn(2+): His210, Asp211, His214, and Glu226.

Belongs to the COQ4 family. As to quaternary structure, component of a multi-subunit COQ enzyme complex, composed of at least COQ3, COQ4, COQ5, COQ6, COQ7 and COQ9. Zn(2+) is required as a cofactor.

The protein resides in the mitochondrion inner membrane. It carries out the reaction a 4-hydroxy-3-methoxy-5-(all-trans-polyprenyl)benzoate + H(+) = a 2-methoxy-6-(all-trans-polyprenyl)phenol + CO2. The protein operates within cofactor biosynthesis; ubiquinone biosynthesis. Lyase that catalyzes the C1-decarboxylation of 4-hydroxy-3-methoxy-5-(all-trans-polyprenyl)benzoic acid into 2-methoxy-6-(all-trans-polyprenyl)phenol during ubiquinone biosynthesis. The protein is Ubiquinone biosynthesis protein COQ4, mitochondrial of Zygosaccharomyces rouxii (strain ATCC 2623 / CBS 732 / NBRC 1130 / NCYC 568 / NRRL Y-229).